A 429-amino-acid polypeptide reads, in one-letter code: 3-phosphoshikimate 1-carboxyvinyltransferase (429 aa).

3-phosphoshikimate contacts are provided by K11, S12, and R16. K11 contacts phosphoenolpyruvate. The phosphoenolpyruvate site is built by G82 and R110. Residues S155, Q157, D302, and K329 each contribute to the 3-phosphoshikimate site. Q157 contacts phosphoenolpyruvate. D302 acts as the Proton acceptor in catalysis. Phosphoenolpyruvate is bound by residues R333 and R385.

This sequence belongs to the EPSP synthase family. In terms of assembly, monomer.

It is found in the cytoplasm. The catalysed reaction is 3-phosphoshikimate + phosphoenolpyruvate = 5-O-(1-carboxyvinyl)-3-phosphoshikimate + phosphate. It functions in the pathway metabolic intermediate biosynthesis; chorismate biosynthesis; chorismate from D-erythrose 4-phosphate and phosphoenolpyruvate: step 6/7. In terms of biological role, catalyzes the transfer of the enolpyruvyl moiety of phosphoenolpyruvate (PEP) to the 5-hydroxyl of shikimate-3-phosphate (S3P) to produce enolpyruvyl shikimate-3-phosphate and inorganic phosphate. The polypeptide is 3-phosphoshikimate 1-carboxyvinyltransferase (Helicobacter pylori (strain Shi470)).